Consider the following 955-residue polypeptide: Bifunctional glutamine synthetase adenylyltransferase/adenylyl-removing enzyme (955 aa).

Positions 1-458 are adenylyl removase; that stretch reads MTAQAPLSVA…QFEQTFSDKQ (458 aa). The adenylyl transferase stretch occupies residues 464–955; that stretch reads CAAIWHADLL…GSIDAASPTP (492 aa).

This sequence belongs to the GlnE family. It depends on Mg(2+) as a cofactor.

The catalysed reaction is [glutamine synthetase]-O(4)-(5'-adenylyl)-L-tyrosine + phosphate = [glutamine synthetase]-L-tyrosine + ADP. The enzyme catalyses [glutamine synthetase]-L-tyrosine + ATP = [glutamine synthetase]-O(4)-(5'-adenylyl)-L-tyrosine + diphosphate. In terms of biological role, involved in the regulation of glutamine synthetase GlnA, a key enzyme in the process to assimilate ammonia. When cellular nitrogen levels are high, the C-terminal adenylyl transferase (AT) inactivates GlnA by covalent transfer of an adenylyl group from ATP to specific tyrosine residue of GlnA, thus reducing its activity. Conversely, when nitrogen levels are low, the N-terminal adenylyl removase (AR) activates GlnA by removing the adenylyl group by phosphorolysis, increasing its activity. The regulatory region of GlnE binds the signal transduction protein PII (GlnB) which indicates the nitrogen status of the cell. The protein is Bifunctional glutamine synthetase adenylyltransferase/adenylyl-removing enzyme of Ralstonia nicotianae (strain ATCC BAA-1114 / GMI1000) (Ralstonia solanacearum).